Reading from the N-terminus, the 81-residue chain is RBAK downstream neighbor protein (81 aa).

Positions 1-22 are cleaved as a signal peptide; it reads MWPPLLLLLLLLPAAPVPTAKA.

The protein localises to the secreted. In Homo sapiens (Human), this protein is RBAK downstream neighbor protein (RBAKDN).